Consider the following 415-residue polypeptide: Serine hydroxymethyltransferase (415 aa).

(6S)-5,6,7,8-tetrahydrofolate is bound by residues L117 and 121–123; that span reads GHL. K225 carries the post-translational modification N6-(pyridoxal phosphate)lysine. 349 to 351 contacts (6S)-5,6,7,8-tetrahydrofolate; that stretch reads SPF.

It belongs to the SHMT family. As to quaternary structure, homodimer. Requires pyridoxal 5'-phosphate as cofactor.

Its subcellular location is the cytoplasm. The enzyme catalyses (6R)-5,10-methylene-5,6,7,8-tetrahydrofolate + glycine + H2O = (6S)-5,6,7,8-tetrahydrofolate + L-serine. It functions in the pathway one-carbon metabolism; tetrahydrofolate interconversion. Its pathway is amino-acid biosynthesis; glycine biosynthesis; glycine from L-serine: step 1/1. Catalyzes the reversible interconversion of serine and glycine with tetrahydrofolate (THF) serving as the one-carbon carrier. This reaction serves as the major source of one-carbon groups required for the biosynthesis of purines, thymidylate, methionine, and other important biomolecules. Also exhibits THF-independent aldolase activity toward beta-hydroxyamino acids, producing glycine and aldehydes, via a retro-aldol mechanism. This chain is Serine hydroxymethyltransferase, found in Nitratiruptor sp. (strain SB155-2).